Consider the following 224-residue polypeptide: Ribonuclease HII (224 aa).

The RNase H type-2 domain maps to 17–201; it reads GTVIGVDEAG…VLSNLSVKKV (185 aa). A divalent metal cation-binding residues include Asp23, Glu24, and Asp111.

It belongs to the RNase HII family. Mn(2+) serves as cofactor. It depends on Mg(2+) as a cofactor.

The protein resides in the cytoplasm. It carries out the reaction Endonucleolytic cleavage to 5'-phosphomonoester.. In terms of biological role, endonuclease that specifically degrades the RNA of RNA-DNA hybrids. This chain is Ribonuclease HII, found in Pseudothermotoga lettingae (strain ATCC BAA-301 / DSM 14385 / NBRC 107922 / TMO) (Thermotoga lettingae).